Reading from the N-terminus, the 602-residue chain is Sodium- and chloride-dependent GABA transporter 2 (602 aa).

At 1–40 (MDSRVSGTTSNGETKPVCPGLEKAAEDGALQREQWSNKME) the chain is on the cytoplasmic side. A run of 3 helical transmembrane segments spans residues 41–61 (FLLS…FPYL), 68–88 (GAFF…VFLL), and 121–141 (IVTL…FYLF). The Extracellular segment spans residues 142-206 (SSFTIDLPWG…GIQHLGALRW (65 aa)). A disulfide bridge links C153 with C162. N-linked (GlcNAc...) asparagine glycosylation is found at N169 and N173. 2 helical membrane passes run 207 to 227 (ELAL…WKGV) and 233 to 253 (VVYF…IRGV). N-linked (GlcNAc...) asparagine glycosylation is present at N269. 7 helical membrane-spanning segments follow: residues 282–302 (AGTQ…ALGS), 319–339 (FLNS…LGFM), 366–386 (VVML…VVLL), 418–438 (VLIL…LTEG), 453–473 (GMCL…AYGA), 490–510 (PLIK…TFLF), and 528–548 (WWGD…IPAW). Residues 549-602 (SCYKLSTLKGSFRERVRQLLCPAKDLPQGHREGPSAPATPRTSLLILTELEPHH) lie on the Cytoplasmic side of the membrane. Phosphothreonine is present on T587. Phosphoserine is present on S591.

This sequence belongs to the sodium:neurotransmitter symporter (SNF) (TC 2.A.22) family. SLC6A13 subfamily.

The protein localises to the cell membrane. It is found in the basolateral cell membrane. It catalyses the reaction 4-aminobutanoate(out) + chloride(out) + 2 Na(+)(out) = 4-aminobutanoate(in) + chloride(in) + 2 Na(+)(in). The enzyme catalyses taurine(out) + chloride(out) + 2 Na(+)(out) = taurine(in) + chloride(in) + 2 Na(+)(in). The catalysed reaction is beta-alanine(out) + chloride(out) + 2 Na(+)(out) = beta-alanine(in) + chloride(in) + 2 Na(+)(in). It carries out the reaction hypotaurine(out) + chloride(out) + 2 Na(+)(out) = hypotaurine(in) + chloride(in) + 2 Na(+)(in). In terms of biological role, mediates sodium- and chloride-dependent transport of gamma-aminobutyric acid (GABA). Can also mediate transport of beta-alanine, taurine and hypotaurine. The sequence is that of Sodium- and chloride-dependent GABA transporter 2 (SLC6A13) from Bos taurus (Bovine).